We begin with the raw amino-acid sequence, 122 residues long: Large ribosomal subunit protein uL14 (122 aa).

The protein belongs to the universal ribosomal protein uL14 family. Part of the 50S ribosomal subunit. Forms a cluster with proteins L3 and L19. In the 70S ribosome, L14 and L19 interact and together make contacts with the 16S rRNA in bridges B5 and B8.

Functionally, binds to 23S rRNA. Forms part of two intersubunit bridges in the 70S ribosome. This is Large ribosomal subunit protein uL14 from Rhodospirillum rubrum (strain ATCC 11170 / ATH 1.1.1 / DSM 467 / LMG 4362 / NCIMB 8255 / S1).